We begin with the raw amino-acid sequence, 352 residues long: tRNA pseudouridine synthase D (352 aa).

Asp-81 acts as the Nucleophile in catalysis. In terms of domain architecture, TRUD spans 157-303 (GIPNYFGAQR…MEHERRILRL (147 aa)).

The protein belongs to the pseudouridine synthase TruD family.

The catalysed reaction is uridine(13) in tRNA = pseudouridine(13) in tRNA. In terms of biological role, responsible for synthesis of pseudouridine from uracil-13 in transfer RNAs. This is tRNA pseudouridine synthase D from Pseudomonas syringae pv. syringae (strain B728a).